Here is a 118-residue protein sequence, read N- to C-terminus: MITNIIISLAVIFVILGAIISAVTAIGIIRLKDIYSRGHAAGKSATLGAIFLLFGTFLYFIATDGYINMQLIFGILFILITGPLSSHLIMRAAYNNKTPYTKDTKIDELKNEFKDKMI.

The next 3 membrane-spanning stretches (helical) occupy residues 9-29 (LAVI…IGII), 47-67 (LGAI…DGYI), and 69-89 (MQLI…SHLI).

Belongs to the CPA3 antiporters (TC 2.A.63) subunit G family. In terms of assembly, may form a heterooligomeric complex that consists of seven subunits: mnhA1, mnhB1, mnhC1, mnhD1, mnhE1, mnhF1 and mnhG1.

The protein resides in the cell membrane. Mnh complex is a Na(+)/H(+) antiporter involved in Na(+) excretion. The protein is Na(+)/H(+) antiporter subunit G1 (mnhG1) of Staphylococcus haemolyticus (strain JCSC1435).